The sequence spans 308 residues: Apolipoprotein E (308 aa).

A signal peptide spans 1-18 (MKFLWAALVVTLLAGCQA). Repeat copies occupy residues 75 to 96 (LLIEETMKEVKAYKEELEKQVG), 97 to 118 (PIAQETQARLSKELQAAQARLE), 119 to 140 (SDMEDVRTRLAQYRSEAQAALG), 141 to 162 (QNTDDLQGRLASHLRKLRKRLL), 163 to 184 (RDAEDLQKRLAVYQAGTHEAAE), 185 to 206 (RGVSAIHERLGPLMMEGPLQAI), 207 to 224 (PPSQQLRERAEAWGQKVR), and 225 to 246 (GRLESVGSQARDRLDDVRDQME). Positions 75 to 246 (LLIEETMKEV…RLDDVRDQME (172 aa)) are 8 X 22 AA approximate tandem repeats. Residues 153–163 (HLRKLRKRLLR) form an LDL and other lipoprotein receptors binding region. A heparin-binding site is contributed by 157 to 160 (LRKR). The lipid-binding and lipoprotein association stretch occupies residues 205–281 (AIPPSQQLRE…SWFEPLVQDM (77 aa)). 220-227 (GQKVRGRL) is a binding site for heparin. Residues 257–308 (SQVRLQAEAFQTRLKSWFEPLVQDMQRQWASLVEKVQSSLGISPSTKPSKTK) are homooligomerization. Positions 269–281 (RLKSWFEPLVQDM) are specificity for association with VLDL.

It belongs to the apolipoprotein A1/A4/E family. Homotetramer. May interact with ABCA1; functionally associated with ABCA1 in the biogenesis of HDLs. May interact with APP/A4 amyloid-beta peptide; the interaction is extremely stable in vitro but its physiological significance is unclear. May interact with MAPT. May interact with MAP2. In the cerebrospinal fluid, interacts with secreted SORL1. Interacts with PMEL; this allows the loading of PMEL luminal fragment on ILVs to induce fibril nucleation. In terms of processing, APOE exists as multiple glycosylated and sialylated glycoforms within cells and in plasma. The extent of glycosylation and sialylation are tissue and context specific. Post-translationally, glycated in plasma VLDL. Phosphorylated by FAM20C in the extracellular medium.

The protein localises to the secreted. Its subcellular location is the extracellular space. It localises to the extracellular matrix. It is found in the extracellular vesicle. The protein resides in the endosome. The protein localises to the multivesicular body. In terms of biological role, APOE is an apolipoprotein, a protein associating with lipid particles, that mainly functions in lipoprotein-mediated lipid transport between organs via the plasma and interstitial fluids. APOE is a core component of plasma lipoproteins and is involved in their production, conversion and clearance. Apolipoproteins are amphipathic molecules that interact both with lipids of the lipoprotein particle core and the aqueous environment of the plasma. As such, APOE associates with chylomicrons, chylomicron remnants, very low density lipoproteins (VLDL) and intermediate density lipoproteins (IDL) but shows a preferential binding to high-density lipoproteins (HDL). It also binds a wide range of cellular receptors including the LDL receptor/LDLR and the very low-density lipoprotein receptor/VLDLR that mediate the cellular uptake of the APOE-containing lipoprotein particles. Finally, APOE also has a heparin-binding activity and binds heparan-sulfate proteoglycans on the surface of cells, a property that supports the capture and the receptor-mediated uptake of APOE-containing lipoproteins by cells. The protein is Apolipoprotein E (APOE) of Pteropus alecto (Black flying fox).